A 126-amino-acid polypeptide reads, in one-letter code: Fluoride-specific ion channel FluC 2 (126 aa).

The next 4 helical transmembrane spans lie at 11 to 31, 43 to 63, 69 to 89, and 93 to 113; these read IFLIGAGGFLGAICRFSLCEL, VLGSFMLGLIMYDTEYIGFIG, AFGTGFMGAFTTFSTFAVQSF, and FFPALENISVNLFLALVGVFM. Na(+) is bound by residues glycine 76 and threonine 79.

The protein belongs to the fluoride channel Fluc/FEX (TC 1.A.43) family.

The protein resides in the cell membrane. The enzyme catalyses fluoride(in) = fluoride(out). Its activity is regulated as follows. Na(+) is not transported, but it plays an essential structural role and its presence is essential for fluoride channel function. Its function is as follows. Fluoride-specific ion channel. Important for reducing fluoride concentration in the cell, thus reducing its toxicity. The chain is Fluoride-specific ion channel FluC 2 from Methanosarcina barkeri (strain Fusaro / DSM 804).